Here is a 231-residue protein sequence, read N- to C-terminus: Glutathione-S-transferase (231 aa).

Residues Leu-15–Gly-98 enclose the GST N-terminal domain.

Belongs to the GST superfamily.

The catalysed reaction is RX + glutathione = an S-substituted glutathione + a halide anion + H(+). Its function is as follows. Conjugation of reduced glutathione to a wide number of exogenous and endogenous hydrophobic electrophiles. The chain is Glutathione-S-transferase from Alternaria alternata (Alternaria rot fungus).